The chain runs to 144 residues: MEVFTKLKEGALLPEYKTSGSAGADLRALIEEPIILKPMQRCLIPTGLSVELPKGIELQVRPRSGLALKHGITVLNTPGTVDSDYRGELAVLLINLGNEDFKIENGDRIAQAVIAQAIQADFLQKDELSNTERGAGGYGSTGIA.

Substrate is bound by residues 63 to 65, N76, and 80 to 82; these read RSG and TVD.

Belongs to the dUTPase family. The cofactor is Mg(2+).

The enzyme catalyses dUTP + H2O = dUMP + diphosphate + H(+). It functions in the pathway pyrimidine metabolism; dUMP biosynthesis; dUMP from dCTP (dUTP route): step 2/2. Its function is as follows. This enzyme is involved in nucleotide metabolism: it produces dUMP, the immediate precursor of thymidine nucleotides and it decreases the intracellular concentration of dUTP so that uracil cannot be incorporated into DNA. In Treponema denticola (strain ATCC 35405 / DSM 14222 / CIP 103919 / JCM 8153 / KCTC 15104), this protein is Deoxyuridine 5'-triphosphate nucleotidohydrolase.